A 210-amino-acid polypeptide reads, in one-letter code: Proteasome subunit beta (210 aa).

The propeptide at 1–10 (MKELDQLTKG) is removed in mature form; by autocatalysis. Residue T11 is the Nucleophile of the active site.

Belongs to the peptidase T1B family. As to quaternary structure, the 20S proteasome core is composed of 14 alpha and 14 beta subunits that assemble into four stacked heptameric rings, resulting in a barrel-shaped structure. The two inner rings, each composed of seven catalytic beta subunits, are sandwiched by two outer rings, each composed of seven alpha subunits. The catalytic chamber with the active sites is on the inside of the barrel. Has a gated structure, the ends of the cylinder being occluded by the N-termini of the alpha-subunits. Is capped at one or both ends by the proteasome regulatory ATPase, PAN.

Its subcellular location is the cytoplasm. It carries out the reaction Cleavage of peptide bonds with very broad specificity.. With respect to regulation, the formation of the proteasomal ATPase PAN-20S proteasome complex, via the docking of the C-termini of PAN into the intersubunit pockets in the alpha-rings, triggers opening of the gate for substrate entry. Interconversion between the open-gate and close-gate conformations leads to a dynamic regulation of the 20S proteasome proteolysis activity. Functionally, component of the proteasome core, a large protease complex with broad specificity involved in protein degradation. The chain is Proteasome subunit beta from Methanopyrus kandleri (strain AV19 / DSM 6324 / JCM 9639 / NBRC 100938).